Here is a 460-residue protein sequence, read N- to C-terminus: Cysteine--tRNA ligase (460 aa).

Zn(2+) is bound at residue C28. The 'HIGH' region motif lies at 30 to 40 (NTVYDFCHIGH). Positions 209, 234, and 238 each coordinate Zn(2+). The 'KMSKS' region motif lies at 266–270 (KMSKS). K269 contributes to the ATP binding site.

The protein belongs to the class-I aminoacyl-tRNA synthetase family. In terms of assembly, monomer. Requires Zn(2+) as cofactor.

It localises to the cytoplasm. It carries out the reaction tRNA(Cys) + L-cysteine + ATP = L-cysteinyl-tRNA(Cys) + AMP + diphosphate. The polypeptide is Cysteine--tRNA ligase (Marinomonas sp. (strain MWYL1)).